A 349-amino-acid polypeptide reads, in one-letter code: DNA polymerase IV (349 aa).

The UmuC domain maps to 3 to 187 (VLFVDFDYFF…LDISKVPGVG (185 aa)). Residues aspartate 7 and aspartate 105 each contribute to the Mg(2+) site. Residue glutamate 106 is part of the active site.

The protein belongs to the DNA polymerase type-Y family. Monomer. Mg(2+) serves as cofactor.

It localises to the cytoplasm. It carries out the reaction DNA(n) + a 2'-deoxyribonucleoside 5'-triphosphate = DNA(n+1) + diphosphate. In terms of biological role, poorly processive, error-prone DNA polymerase involved in untargeted mutagenesis. Copies undamaged DNA at stalled replication forks, which arise in vivo from mismatched or misaligned primer ends. These misaligned primers can be extended by PolIV. Exhibits no 3'-5' exonuclease (proofreading) activity. May be involved in translesional synthesis. The protein is DNA polymerase IV of Metallosphaera sedula (strain ATCC 51363 / DSM 5348 / JCM 9185 / NBRC 15509 / TH2).